The chain runs to 292 residues: MAGSLREIKAKIASIKQTSHITGAMQMVSASKLTRSEQAAKDFQIYASKIRQITTDLLHSELVNGSSNPMLDARPVRKSGYIVITSDKGLVGGYNSTILKAVLDMIKRDHDSEDEYAIISIGGTGSDFFKARNMNVAFELRGLEDQPSFDQVGKIISKAVGMYQNELFDELYVCYNHHINSLSREVRVEKMLPIADFDPNESEGHVLTKFELEPDRDTILDQLLPQYAESLIYGAIVDAKTAEHAAGMTAMQTATDNAKKIINDLTIQYNRARQAAITQEITEIVGGASALE.

This sequence belongs to the ATPase gamma chain family. F-type ATPases have 2 components, CF(1) - the catalytic core - and CF(0) - the membrane proton channel. CF(1) has five subunits: alpha(3), beta(3), gamma(1), delta(1), epsilon(1). CF(0) has three main subunits: a, b and c.

It localises to the cell membrane. Its function is as follows. Produces ATP from ADP in the presence of a proton gradient across the membrane. The gamma chain is believed to be important in regulating ATPase activity and the flow of protons through the CF(0) complex. The polypeptide is ATP synthase gamma chain (Streptococcus thermophilus (strain CNRZ 1066)).